A 203-amino-acid polypeptide reads, in one-letter code: Small ribosomal subunit protein uS4 (203 aa).

The region spanning arginine 93 to valine 156 is the S4 RNA-binding domain.

The protein belongs to the universal ribosomal protein uS4 family. In terms of assembly, part of the 30S ribosomal subunit. Contacts protein S5. The interaction surface between S4 and S5 is involved in control of translational fidelity.

In terms of biological role, one of the primary rRNA binding proteins, it binds directly to 16S rRNA where it nucleates assembly of the body of the 30S subunit. Its function is as follows. With S5 and S12 plays an important role in translational accuracy. This Streptococcus uberis (strain ATCC BAA-854 / 0140J) protein is Small ribosomal subunit protein uS4.